Reading from the N-terminus, the 347-residue chain is Fructose-1,6-bisphosphatase class 1 (347 aa).

4 residues coordinate Mg(2+): Glu107, Asp128, Leu130, and Asp131. Substrate contacts are provided by residues 131–134 (DGSS), Asn224, Tyr257, and Lys286. Glu292 contacts Mg(2+).

Belongs to the FBPase class 1 family. In terms of assembly, homotetramer. Requires Mg(2+) as cofactor.

It is found in the cytoplasm. It catalyses the reaction beta-D-fructose 1,6-bisphosphate + H2O = beta-D-fructose 6-phosphate + phosphate. It participates in carbohydrate biosynthesis; gluconeogenesis. This Sorangium cellulosum (strain So ce56) (Polyangium cellulosum (strain So ce56)) protein is Fructose-1,6-bisphosphatase class 1.